The primary structure comprises 128 residues: Probable 4-amino-4-deoxy-L-arabinose-phosphoundecaprenol flippase subunit ArnF (128 aa).

At 1-2 (MG) the chain is on the cytoplasmic side. The chain crosses the membrane as a helical span at residues 3–23 (LMWGLFSVIIASVAQLSLGFA). The Periplasmic segment spans residues 24–35 (ASHLPPMTHLWD). Residues 36 to 56 (FIATLLAFGLDARILLLGLLG) form a helical membrane-spanning segment. Over 57–77 (YLLSVFCWYKTLHKLALSKAY) the chain is Cytoplasmic. The helical transmembrane segment at 78–98 (ALLSMSYVLVWIASMVLPGWG) threads the bilayer. The Periplasmic portion of the chain corresponds to 99-100 (GT). Residues 101–121 (FSLKALLGVACIMSGLMLIFL) traverse the membrane as a helical segment. The Cytoplasmic portion of the chain corresponds to 122-128 (PTTKQRY).

This sequence belongs to the ArnF family. Heterodimer of ArnE and ArnF.

It is found in the cell inner membrane. Its pathway is bacterial outer membrane biogenesis; lipopolysaccharide biosynthesis. In terms of biological role, translocates 4-amino-4-deoxy-L-arabinose-phosphoundecaprenol (alpha-L-Ara4N-phosphoundecaprenol) from the cytoplasmic to the periplasmic side of the inner membrane. The polypeptide is Probable 4-amino-4-deoxy-L-arabinose-phosphoundecaprenol flippase subunit ArnF (Shigella dysenteriae serotype 1 (strain Sd197)).